The chain runs to 81 residues: Xenopsin peptides (81 aa).

A signal peptide spans 1–20 (MYKGIFLCVLLAVICANSLA). Residues 21-37 (TPSSDADEDNDEVERYV) constitute a propeptide that is removed on maturation. Positions 65-73 (EAMLRSAEA) are cleaved as a propeptide — removed in mature form by a dipeptidylpeptidase.

The protein belongs to the gastrin/cholecystokinin family. Magainin subfamily. XPF is synthesized in the stomach and stored in a novel granular multinucleated cell in the gastric mucosa, it is stored as active, processed peptides in large granules within the granular gland secretions of the skin.

Its subcellular location is the secreted. In terms of biological role, xenopsin is a neurotensin-like octapeptide. Its function is as follows. XPF has antimicrobial activity. The sequence is that of Xenopsin peptides from Xenopus laevis (African clawed frog).